Consider the following 338-residue polypeptide: Anthranilate phosphoribosyltransferase (338 aa).

5-phospho-alpha-D-ribose 1-diphosphate contacts are provided by residues G81, G84–D85, S89, N91–T94, K109–S117, and A121. G81 is an anthranilate binding site. Position 93 (S93) interacts with Mg(2+). N112 contacts anthranilate. R167 is a binding site for anthranilate. Mg(2+) contacts are provided by D226 and E227.

The protein belongs to the anthranilate phosphoribosyltransferase family. As to quaternary structure, homodimer. It depends on Mg(2+) as a cofactor.

The catalysed reaction is N-(5-phospho-beta-D-ribosyl)anthranilate + diphosphate = 5-phospho-alpha-D-ribose 1-diphosphate + anthranilate. Its pathway is amino-acid biosynthesis; L-tryptophan biosynthesis; L-tryptophan from chorismate: step 2/5. Functionally, catalyzes the transfer of the phosphoribosyl group of 5-phosphorylribose-1-pyrophosphate (PRPP) to anthranilate to yield N-(5'-phosphoribosyl)-anthranilate (PRA). In Rhodopseudomonas palustris (strain BisB5), this protein is Anthranilate phosphoribosyltransferase.